We begin with the raw amino-acid sequence, 542 residues long: Chondroitin sulfate N-acetylgalactosaminyltransferase 2 (542 aa).

Residues 1–13 (MSRRGSILHSRTQ) are Cytoplasmic-facing. Residues 14-34 (WLLLGLALLFSLVLFMYLLEC) traverse the membrane as a helical; Signal-anchor for type II membrane protein segment. The Lumenal portion of the chain corresponds to 35-542 (APQTDGNASL…AYRTNSETAG (508 aa)). N-linked (GlcNAc...) asparagine glycosylation occurs at asparagine 41. The stretch at 59–105 (ALLQEQEEHYQTRATSLKRQIAQLKQELQDMSEKMRALQERKKLGAN) forms a coiled coil. N-linked (GlcNAc...) asparagine glycosylation occurs at asparagine 333. The a divalent metal cation site is built by aspartate 369 and histidine 486.

The protein belongs to the chondroitin N-acetylgalactosaminyltransferase family.

It localises to the golgi apparatus. It is found in the golgi stack membrane. The catalysed reaction is 3-O-(beta-D-GlcA-(1-&gt;3)-beta-D-Gal-(1-&gt;3)-beta-D-Gal-(1-&gt;4)-beta-D-Xyl)-L-seryl-[protein] + UDP-N-acetyl-alpha-D-galactosamine = 3-O-(beta-D-GalNAc-(1-&gt;4)-beta-D-GlcA-(1-&gt;3)-beta-D-Gal-(1-&gt;3)-beta-D-Gal-(1-&gt;4)-beta-D-Xyl)-L-seryl-[protein] + UDP + H(+). Functionally, transfers 1,4-N-acetylgalactosamine (GalNAc) from UDP-GalNAc to the non-reducing end of glucuronic acid (GlcUA). Required for addition of the first GalNAc to the core tetrasaccharide linker and for elongation of chondroitin chains. The chain is Chondroitin sulfate N-acetylgalactosaminyltransferase 2 (Csgalnact2) from Mus musculus (Mouse).